The sequence spans 223 residues: Deoxyribose-phosphate aldolase (223 aa).

Asp-91 functions as the Proton donor/acceptor in the catalytic mechanism. Lys-153 (schiff-base intermediate with acetaldehyde) is an active-site residue. Catalysis depends on Lys-183, which acts as the Proton donor/acceptor.

It belongs to the DeoC/FbaB aldolase family. DeoC type 1 subfamily.

It localises to the cytoplasm. It carries out the reaction 2-deoxy-D-ribose 5-phosphate = D-glyceraldehyde 3-phosphate + acetaldehyde. It functions in the pathway carbohydrate degradation; 2-deoxy-D-ribose 1-phosphate degradation; D-glyceraldehyde 3-phosphate and acetaldehyde from 2-deoxy-alpha-D-ribose 1-phosphate: step 2/2. Catalyzes a reversible aldol reaction between acetaldehyde and D-glyceraldehyde 3-phosphate to generate 2-deoxy-D-ribose 5-phosphate. The sequence is that of Deoxyribose-phosphate aldolase from Mycoplasmopsis synoviae (strain 53) (Mycoplasma synoviae).